Here is a 314-residue protein sequence, read N- to C-terminus: tRNA dimethylallyltransferase (314 aa).

8-15 (GPTGAGKS) serves as a coordination point for ATP. 10-15 (TGAGKS) is a substrate binding site.

The protein belongs to the IPP transferase family. In terms of assembly, monomer. Mg(2+) serves as cofactor.

It catalyses the reaction adenosine(37) in tRNA + dimethylallyl diphosphate = N(6)-dimethylallyladenosine(37) in tRNA + diphosphate. In terms of biological role, catalyzes the transfer of a dimethylallyl group onto the adenine at position 37 in tRNAs that read codons beginning with uridine, leading to the formation of N6-(dimethylallyl)adenosine (i(6)A). In Mycobacterium tuberculosis (strain ATCC 25177 / H37Ra), this protein is tRNA dimethylallyltransferase.